A 473-amino-acid chain; its full sequence is Putative tyrosine recombinase XerC (473 aa).

Positions 4 to 82 constitute a Core-binding (CB) domain; it reads MTLPELTQEY…HLRTVYRYAM (79 aa). In terms of domain architecture, Tyr recombinase spans 118–305; that stretch reads RNWLRFLVQE…DYDLMREVMN (188 aa). Residues arginine 156, lysine 183, histidine 256, arginine 259, and histidine 283 contribute to the active site. Residue tyrosine 292 is the O-(3'-phospho-DNA)-tyrosine intermediate of the active site. Positions 341–352 are enriched in polar residues; it reads SGTELQPATTES. Positions 341 to 365 are disordered; it reads SGTELQPATTESSEAKKADDTASNP.

It belongs to the 'phage' integrase family.

It localises to the cytoplasm. Site-specific tyrosine recombinase, which acts by catalyzing the cutting and rejoining of the recombining DNA molecules. The sequence is that of Putative tyrosine recombinase XerC from Pseudomonas syringae.